Consider the following 179-residue polypeptide: Ubiquitin-conjugating enzyme E2 2 (179 aa).

Positions 1–28 (MSTPARRRLMRDFKRMQQDPPSGVSASP) are disordered. One can recognise a UBC core domain in the interval 4–150 (PARRRLMRDF…VRETVENSWN (147 aa)). Residue Cys-88 is the Glycyl thioester intermediate of the active site. Residues 145–179 (VENSWNDDDDEEEEEEDEDEAEDEDDDDDDNIDED) form a disordered region. Residues 149–179 (WNDDDDEEEEEEDEDEAEDEDDDDDDNIDED) show a composition bias toward acidic residues. Residues 151–179 (DDDDEEEEEEDEDEAEDEDDDDDDNIDED) form an acidic tail region.

This sequence belongs to the ubiquitin-conjugating enzyme family.

Its subcellular location is the cytoplasm. The protein resides in the nucleus. It carries out the reaction S-ubiquitinyl-[E1 ubiquitin-activating enzyme]-L-cysteine + [E2 ubiquitin-conjugating enzyme]-L-cysteine = [E1 ubiquitin-activating enzyme]-L-cysteine + S-ubiquitinyl-[E2 ubiquitin-conjugating enzyme]-L-cysteine.. Its pathway is protein modification; protein ubiquitination. Its function is as follows. Catalyzes the covalent attachment of ubiquitin to other proteins. Plays a role in transcription regulation by catalyzing the monoubiquitination of histone H2B to form H2BK123ub1. H2BK123ub1 gives a specific tag for epigenetic transcriptional activation and is also a prerequisite for H3K4me and H3K79me formation. Also involved in postreplication repair of UV-damaged DNA, in N-end rule-dependent protein degradation and in sporulation. The polypeptide is Ubiquitin-conjugating enzyme E2 2 (UBC2) (Candida albicans (strain SC5314 / ATCC MYA-2876) (Yeast)).